The primary structure comprises 98 residues: NADH-ubiquinone oxidoreductase chain 4L (98 aa).

The next 3 membrane-spanning stretches (helical) occupy residues 2-22, 29-49, and 61-81; these read PSIS…MLMF, SLLC…LTIL, and ILLL…LVMV.

It belongs to the complex I subunit 4L family. As to quaternary structure, core subunit of respiratory chain NADH dehydrogenase (Complex I) which is composed of 45 different subunits.

The protein resides in the mitochondrion inner membrane. It catalyses the reaction a ubiquinone + NADH + 5 H(+)(in) = a ubiquinol + NAD(+) + 4 H(+)(out). Functionally, core subunit of the mitochondrial membrane respiratory chain NADH dehydrogenase (Complex I) which catalyzes electron transfer from NADH through the respiratory chain, using ubiquinone as an electron acceptor. Part of the enzyme membrane arm which is embedded in the lipid bilayer and involved in proton translocation. This Microcebus simmonsi (Simmons's mouse lemur) protein is NADH-ubiquinone oxidoreductase chain 4L (MT-ND4L).